The sequence spans 225 residues: 3-dehydroquinate dehydratase (225 aa).

3-dehydroquinate is bound by residues 30–32 and arginine 62; that span reads EWR. Catalysis depends on histidine 118, which acts as the Proton donor/acceptor. The active-site Schiff-base intermediate with substrate is lysine 143. Positions 186 and 209 each coordinate 3-dehydroquinate.

The protein belongs to the type-I 3-dehydroquinase family. Homodimer.

The enzyme catalyses 3-dehydroquinate = 3-dehydroshikimate + H2O. It functions in the pathway metabolic intermediate biosynthesis; chorismate biosynthesis; chorismate from D-erythrose 4-phosphate and phosphoenolpyruvate: step 3/7. Involved in the third step of the chorismate pathway, which leads to the biosynthesis of aromatic amino acids. Catalyzes the cis-dehydration of 3-dehydroquinate (DHQ) and introduces the first double bond of the aromatic ring to yield 3-dehydroshikimate. This Streptococcus agalactiae serotype Ia (strain ATCC 27591 / A909 / CDC SS700) protein is 3-dehydroquinate dehydratase.